Reading from the N-terminus, the 361-residue chain is Phospho-N-acetylmuramoyl-pentapeptide-transferase (361 aa).

Helical transmembrane passes span 27–47 (ILAS…MIRW), 70–90 (GTPT…CLLW), 97–117 (SLWL…VDDY), 134–154 (YFWQ…NASL), 167–187 (TVTW…IVGS), 199–219 (GLAI…AYAS), 236–256 (TGEL…FLWY), 263–283 (VFMG…VAIV), 288–308 (LVLL…ILQV), and 338–358 (KVIV…LATL).

It belongs to the glycosyltransferase 4 family. MraY subfamily. Mg(2+) is required as a cofactor.

It is found in the cell inner membrane. The catalysed reaction is UDP-N-acetyl-alpha-D-muramoyl-L-alanyl-gamma-D-glutamyl-meso-2,6-diaminopimeloyl-D-alanyl-D-alanine + di-trans,octa-cis-undecaprenyl phosphate = di-trans,octa-cis-undecaprenyl diphospho-N-acetyl-alpha-D-muramoyl-L-alanyl-D-glutamyl-meso-2,6-diaminopimeloyl-D-alanyl-D-alanine + UMP. Its pathway is cell wall biogenesis; peptidoglycan biosynthesis. In terms of biological role, catalyzes the initial step of the lipid cycle reactions in the biosynthesis of the cell wall peptidoglycan: transfers peptidoglycan precursor phospho-MurNAc-pentapeptide from UDP-MurNAc-pentapeptide onto the lipid carrier undecaprenyl phosphate, yielding undecaprenyl-pyrophosphoryl-MurNAc-pentapeptide, known as lipid I. This chain is Phospho-N-acetylmuramoyl-pentapeptide-transferase, found in Legionella pneumophila (strain Paris).